The chain runs to 166 residues: Crossover junction endodeoxyribonuclease RuvC (166 aa).

Active-site residues include Asp-7, Glu-67, and Asp-139. Asp-7, Glu-67, and Asp-139 together coordinate Mg(2+).

Belongs to the RuvC family. As to quaternary structure, homodimer which binds Holliday junction (HJ) DNA. The HJ becomes 2-fold symmetrical on binding to RuvC with unstacked arms; it has a different conformation from HJ DNA in complex with RuvA. In the full resolvosome a probable DNA-RuvA(4)-RuvB(12)-RuvC(2) complex forms which resolves the HJ. It depends on Mg(2+) as a cofactor.

The protein resides in the cytoplasm. It catalyses the reaction Endonucleolytic cleavage at a junction such as a reciprocal single-stranded crossover between two homologous DNA duplexes (Holliday junction).. Functionally, the RuvA-RuvB-RuvC complex processes Holliday junction (HJ) DNA during genetic recombination and DNA repair. Endonuclease that resolves HJ intermediates. Cleaves cruciform DNA by making single-stranded nicks across the HJ at symmetrical positions within the homologous arms, yielding a 5'-phosphate and a 3'-hydroxyl group; requires a central core of homology in the junction. The consensus cleavage sequence is 5'-(A/T)TT(C/G)-3'. Cleavage occurs on the 3'-side of the TT dinucleotide at the point of strand exchange. HJ branch migration catalyzed by RuvA-RuvB allows RuvC to scan DNA until it finds its consensus sequence, where it cleaves and resolves the cruciform DNA. This is Crossover junction endodeoxyribonuclease RuvC from Paramagnetospirillum magneticum (strain ATCC 700264 / AMB-1) (Magnetospirillum magneticum).